Consider the following 729-residue polypeptide: Elongation factor 2 (729 aa).

The tr-type G domain maps to 19–262; sequence EQIRNIAIAA…MVCEHFPNPI (244 aa). GTP contacts are provided by residues 28–35, 94–98, and 148–151; these read AHVDHGKT, DTPGH, and NKVD. His597 bears the Diphthamide mark.

Belongs to the TRAFAC class translation factor GTPase superfamily. Classic translation factor GTPase family. EF-G/EF-2 subfamily.

The protein localises to the cytoplasm. Catalyzes the GTP-dependent ribosomal translocation step during translation elongation. During this step, the ribosome changes from the pre-translocational (PRE) to the post-translocational (POST) state as the newly formed A-site-bound peptidyl-tRNA and P-site-bound deacylated tRNA move to the P and E sites, respectively. Catalyzes the coordinated movement of the two tRNA molecules, the mRNA and conformational changes in the ribosome. This chain is Elongation factor 2, found in Halomicrobium mukohataei (strain ATCC 700874 / DSM 12286 / JCM 9738 / NCIMB 13541) (Haloarcula mukohataei).